A 384-amino-acid polypeptide reads, in one-letter code: tRNA-specific 2-thiouridylase MnmA (384 aa).

The disordered stretch occupies residues 1 to 26 (MDEGIRASGGIRACQTGKQKQGRKRP). Residues 36–43 (GMSGGVDS) and M62 contribute to the ATP site. The segment at 122–124 (NPD) is interaction with target base in tRNA. Catalysis depends on C127, which acts as the Nucleophile. C127 and C223 are disulfide-bonded. G151 contacts ATP. The segment at 173 to 175 (KDQ) is interaction with tRNA. The active-site Cysteine persulfide intermediate is the C223. The interval 334-335 (RY) is interaction with tRNA.

The protein belongs to the MnmA/TRMU family.

It is found in the cytoplasm. It catalyses the reaction S-sulfanyl-L-cysteinyl-[protein] + uridine(34) in tRNA + AH2 + ATP = 2-thiouridine(34) in tRNA + L-cysteinyl-[protein] + A + AMP + diphosphate + H(+). Catalyzes the 2-thiolation of uridine at the wobble position (U34) of tRNA, leading to the formation of s(2)U34. This is tRNA-specific 2-thiouridylase MnmA from Chromobacterium violaceum (strain ATCC 12472 / DSM 30191 / JCM 1249 / CCUG 213 / NBRC 12614 / NCIMB 9131 / NCTC 9757 / MK).